We begin with the raw amino-acid sequence, 294 residues long: 33 kDa chaperonin (294 aa).

Disulfide bonds link C236/C238 and C269/C272.

The protein belongs to the HSP33 family. Under oxidizing conditions two disulfide bonds are formed involving the reactive cysteines. Under reducing conditions zinc is bound to the reactive cysteines and the protein is inactive.

The protein localises to the cytoplasm. In terms of biological role, redox regulated molecular chaperone. Protects both thermally unfolding and oxidatively damaged proteins from irreversible aggregation. Plays an important role in the bacterial defense system toward oxidative stress. The polypeptide is 33 kDa chaperonin (Desulforamulus reducens (strain ATCC BAA-1160 / DSM 100696 / MI-1) (Desulfotomaculum reducens)).